Consider the following 1529-residue polypeptide: Mediator of RNA polymerase II transcription subunit 1.1 (1529 aa).

Disordered regions lie at residues proline 685 to glutamate 740, glutamine 807 to asparagine 919, and proline 933 to glutamate 1529. A compositionally biased stretch (basic residues) spans glycine 693 to lysine 702. Composition is skewed to low complexity over residues glycine 722 to glycine 739 and glutamine 807 to glutamine 828. Residues threonine 894–phenylalanine 905 are compositionally biased toward pro residues. Residues glutamate 908–asparagine 919 show a composition bias toward basic and acidic residues. Low complexity-rich tracts occupy residues serine 958–threonine 990 and glutamine 1008–glutamine 1023. A coiled-coil region spans residues glutamine 1008–glutamate 1032. Composition is skewed to polar residues over residues asparagine 1051–asparagine 1061, glycine 1068–serine 1089, and threonine 1096–glutamine 1105. Basic and acidic residues-rich tracts occupy residues leucine 1113–isoleucine 1130, leucine 1137–lysine 1185, arginine 1192–serine 1240, and proline 1262–serine 1278. Positions glutamate 1169 to aspartate 1202 form a coiled coil. Positions isoleucine 1279–serine 1288 are enriched in low complexity. A compositionally biased stretch (basic and acidic residues) spans serine 1289–serine 1304. A compositionally biased stretch (low complexity) spans serine 1349–glycine 1365. Pro residues-rich tracts occupy residues proline 1375–glycine 1386 and glutamine 1477–serine 1500.

Belongs to the Mediator complex subunit 1 family. As to quaternary structure, component of the Mediator complex.

The protein localises to the nucleus. In terms of biological role, component of the Mediator complex, a coactivator involved in the regulated transcription of nearly all RNA polymerase II-dependent genes. Mediator functions as a bridge to convey information from gene-specific regulatory proteins to the basal RNA polymerase II transcription machinery. Mediator is recruited to promoters by direct interactions with regulatory proteins and serves as a scaffold for the assembly of a functional preinitiation complex with RNA polymerase II and the general transcription factors. The sequence is that of Mediator of RNA polymerase II transcription subunit 1.1 (sop-3) from Caenorhabditis briggsae.